We begin with the raw amino-acid sequence, 120 residues long: NAD(P)H-quinone oxidoreductase subunit 3, chloroplastic (120 aa).

A run of 3 helical transmembrane segments spans residues 9–29, 64–84, and 88–108; these read IFWAFLIISSLIPILAFLISG, MFALIFVVFDVETVFLYPWAM, and VLGVSVFLEAFLFVLILIVGS.

The protein belongs to the complex I subunit 3 family. As to quaternary structure, NDH is composed of at least 16 different subunits, 5 of which are encoded in the nucleus.

It is found in the plastid. It localises to the chloroplast thylakoid membrane. It catalyses the reaction a plastoquinone + NADH + (n+1) H(+)(in) = a plastoquinol + NAD(+) + n H(+)(out). The enzyme catalyses a plastoquinone + NADPH + (n+1) H(+)(in) = a plastoquinol + NADP(+) + n H(+)(out). Functionally, NDH shuttles electrons from NAD(P)H:plastoquinone, via FMN and iron-sulfur (Fe-S) centers, to quinones in the photosynthetic chain and possibly in a chloroplast respiratory chain. The immediate electron acceptor for the enzyme in this species is believed to be plastoquinone. Couples the redox reaction to proton translocation, and thus conserves the redox energy in a proton gradient. The protein is NAD(P)H-quinone oxidoreductase subunit 3, chloroplastic of Phaseolus vulgaris (Kidney bean).